The sequence spans 290 residues: Putative transport permease ycf38 (290 aa).

The next 7 membrane-spanning stretches (helical) occupy residues 21–41, 46–66, 86–106, 133–153, 167–187, 194–213, and 261–281; these read VTSF…FIQL, ITLI…GALF, PGIL…PLIF, FFIS…GVFL, FFFL…LALL, LIAV…TALA, and INIG…FLLF. In terms of domain architecture, ABC transmembrane type-2 spans 46 to 284; it reads ITLISGILQP…LVGFLLFKKI (239 aa).

Belongs to the ABC-2 integral membrane protein family.

It is found in the plastid. The protein resides in the cyanelle membrane. The sequence is that of Putative transport permease ycf38 (ycf38) from Cyanophora paradoxa.